We begin with the raw amino-acid sequence, 199 residues long: LPICPSGAVNCQVSLRDLFDRAVILSHYIHNLSSEMFNEFDKRYAQGRGFMTKAINSCHTSSLSTPEDKEQAQQIHHEDLLNLVLRVLRSWNDPLYHLVTEVRGMQEAPDAILSRAIEIEEQNKRLLEGMEKIVGQVHPGVKENEIYSVWSGLPSLQMADEDTRLFAFYNLLHCLRRDSHKIDNYLKLLKCRIIYDSNC.

A disulfide bridge links cysteine 4 with cysteine 11. Position 26 is a phosphoserine (serine 26). Residue asparagine 31 is glycosylated (N-linked (GlcNAc...) asparagine; partial). Phosphoserine is present on residues serine 34 and serine 90. 2 cysteine pairs are disulfide-bonded: cysteine 58-cysteine 174 and cysteine 191-cysteine 199.

Belongs to the somatotropin/prolactin family. In terms of assembly, interacts with PRLR.

The protein localises to the secreted. Its function is as follows. Prolactin acts primarily on the mammary gland by promoting lactation. The chain is Prolactin (PRL) from Camelus dromedarius (Dromedary).